The sequence spans 1073 residues: Self-sufficient cytochrome P450 monooxygenase CYP505AG1 (1073 aa).

A heme-binding site is contributed by cysteine 409. The 144-residue stretch at 501–644 (VTILYGSNSG…DLENWEDEHL (144 aa)) folds into the Flavodoxin-like domain. FMN contacts are provided by residues 507–511 (SNSGT) and 588–620 (VFACGHHDWAKTFYKVPIMIDELLARAGAHRVA). The 230-residue stretch at 680–909 (HNAVECIVSE…RPCKKQFHLP (230 aa)) folds into the FAD-binding FR-type domain.

This sequence in the N-terminal section; belongs to the cytochrome P450 family. Requires FAD as cofactor. It depends on FMN as a cofactor. Heme is required as a cofactor.

The enzyme catalyses 2 oxidized [cytochrome P450] + NADPH = 2 reduced [cytochrome P450] + NADP(+) + H(+). It catalyses the reaction an organic molecule + reduced [NADPH--hemoprotein reductase] + O2 = an alcohol + oxidized [NADPH--hemoprotein reductase] + H2O + H(+). It carries out the reaction dodecanoate + reduced [NADPH--hemoprotein reductase] + O2 = 10-hydroxydodecanoate + oxidized [NADPH--hemoprotein reductase] + H2O + H(+). The catalysed reaction is tetradecanoate + reduced [NADPH--hemoprotein reductase] + O2 = 12-hydroxytetradecanoate + oxidized [NADPH--hemoprotein reductase] + H2O + H(+). Functionally, self-sufficient cytochrome P450 monooxygenase that catalyzes the regioselective in-chain hydroxylation of alkanes, fatty alcohols, and fatty acids, giving sub-terminal hydroxylation by acting preferentially on the omega-2 position. Prefers fatty acids as substrates, since it hydroxylates the small amounts of dodecanoic acid formed in the presence of an excess of 1-dodecanol. The protein is Self-sufficient cytochrome P450 monooxygenase CYP505AG1 of Oidiodendron maius (strain Zn).